The following is a 369-amino-acid chain: 3-dehydroquinate synthase (369 aa).

NAD(+)-binding positions include 72–77, 130–131, Lys142, and Lys151; these read SGEKEK and TT. Zn(2+)-binding residues include Glu184, His247, and His264.

Belongs to the sugar phosphate cyclases superfamily. Dehydroquinate synthase family. Co(2+) is required as a cofactor. Requires Zn(2+) as cofactor. It depends on NAD(+) as a cofactor.

The protein localises to the cytoplasm. It carries out the reaction 7-phospho-2-dehydro-3-deoxy-D-arabino-heptonate = 3-dehydroquinate + phosphate. Its pathway is metabolic intermediate biosynthesis; chorismate biosynthesis; chorismate from D-erythrose 4-phosphate and phosphoenolpyruvate: step 2/7. Its function is as follows. Catalyzes the conversion of 3-deoxy-D-arabino-heptulosonate 7-phosphate (DAHP) to dehydroquinate (DHQ). This is 3-dehydroquinate synthase from Bacillus cytotoxicus (strain DSM 22905 / CIP 110041 / 391-98 / NVH 391-98).